The sequence spans 899 residues: Gamma-aminobutyric acid type B receptor subunit 1 (899 aa).

The signal sequence occupies residues 1–19 (MFVRSSWLLLWGTIVWASA). At 20-447 (EPVTLHIGGT…KKHAMTVSNE (428 aa)) the chain is on the extracellular side. N-linked (GlcNAc...) asparagine glycans are attached at residues asparagine 69, asparagine 266, asparagine 339, asparagine 353, and asparagine 371. Residues 448–468 (FYYPTILFAVLGIAACVFIYL) form a helical membrane-spanning segment. Residues 469–487 (FTQKHHERLIIFQSQPECN) are Cytoplasmic-facing. The chain crosses the membrane as a helical span at residues 488-508 (NILLIGCSLCLFSLFLIGLPS). Over 509–525 (DDISISESLFPLLCHAR) the chain is Extracellular. Residues 526–546 (VTILLFGFTFAYGSMFAKVWI) form a helical membrane-spanning segment. Topologically, residues 547-616 (VHRMGATENQ…LNQPISSSKF (70 aa)) are cytoplasmic. Residues 617 to 637 (YVIVAALTAVDVFVCFVWVLI) traverse the membrane as a helical segment. Over 638-674 (DPLHLTEQKFPLFTPADSEEDEMIMPVLQQCQSNQQE) the chain is Extracellular. Residues 675–695 (VWIGIIMGFKCLLLVFGTFLS) form a helical membrane-spanning segment. At 696–713 (YETRNLKLRFINDSRFVG) the chain is on the cytoplasmic side. A helical transmembrane segment spans residues 714–734 (LAIYNVAVMTLVTAPVVTLLI). The Extracellular segment spans residues 735 to 741 (HGKVDAN). The chain crosses the membrane as a helical span at residues 742–762 (FAFISLTVLICTYISVGLIYG). The Cytoplasmic portion of the chain corresponds to 763–899 (PKIRHIIKVP…SSTSSDEILL (137 aa)). A coiled-coil region spans residues 791–842 (KVDQKRYDMLKKENETLQIQIEEKERKIHECKERLEELTKNSETEDMNAQLL). The tract at residues 870–899 (DLQNGNHPGQIYENDNDDDGSSTSSDEILL) is disordered. Residues 890 to 899 (SSTSSDEILL) show a composition bias toward low complexity.

It belongs to the G-protein coupled receptor 3 family. As to quaternary structure, may form a heterodimer with gbb-2. As to expression, expressed in the nervous system, including cholinergic motor neurons, but not in GABAergic motor neurons or muscle.

The protein resides in the cell membrane. Component of a heterodimeric G-protein coupled receptor for GABA, formed by gbb-1 and gbb-2. Within the heterodimeric GABA receptor, only gbb-1 seems to bind agonists, while gbb-2 mediates coupling to G proteins. Ligand binding causes a conformation change that triggers signaling via guanine nucleotide-binding proteins (G proteins) and modulates the activity of down-stream effectors, such as adenylate cyclase. Signaling inhibits adenylate cyclase, stimulates phospholipase A2, activates potassium channels, inactivates voltage-dependent calcium-channels and modulates inositol phospholipid hydrolysis. Calcium is required for high affinity binding to GABA. Plays a critical role in the fine-tuning of inhibitory synaptic transmission. Pre-synaptic GABA receptor inhibits neurotransmitter release by down-regulating high-voltage activated calcium channels, whereas postsynaptic GABA receptor decreases neuronal excitability by activating a prominent inwardly rectifying potassium (Kir) conductance that underlies the late inhibitory postsynaptic potentials. Along with gbb-2, may couple to the G(o)-alpha G-protein goa-1 to negatively regulate cholinergic receptor activity in the presence of high levels of acetylcholine in ventral cord motor neurons. As acetylcholine depolarizes body wall muscles, modulation of acetylcholine levels most likely results in the control of locomotory behavior. Acts in neurons to regulate lifespan, and this may be through G-protein-egl-8/PLC-beta signaling to the transcription factor daf-16/FOXO. The sequence is that of Gamma-aminobutyric acid type B receptor subunit 1 from Caenorhabditis elegans.